The following is a 253-amino-acid chain: uncharacterized protein (253 aa).

2 C2HC LYAR-type zinc fingers span residues Met1–Arg26 and Asn27–Ile51. Positions 6, 9, 21, 25, 32, 35, 47, and 50 each coordinate Zn(2+). Residues Ala136–Thr171 are a coiled coil.

Its subcellular location is the nucleus. This is an uncharacterized protein from Caenorhabditis elegans.